Reading from the N-terminus, the 197-residue chain is Adenylate kinase isoenzyme 6 homolog FAP7 (197 aa).

5 residues coordinate ATP: Gly-17, Gly-19, Lys-20, Ser-21, and Ser-22. The NMPbind stretch occupies residues 38 to 61 (NISDFAKDNDCFEGYDEGRKSHIV). Residues 113–123 (ARGYHDSKIEE) are LID. Arg-114 is an ATP binding site. Residues 176–197 (PDGVTNEYQGPRSDDEDDEDSE) form a disordered region. Tyr-183 is subject to Phosphotyrosine. Ser-188 and Ser-196 each carry phosphoserine.

The protein belongs to the adenylate kinase family. AK6 subfamily. Interacts with small ribosomal subunit protein uS11B/RPS14B. Not a structural component of 43S pre-ribosomes, but transiently interacts with them by binding to uS11/RPS14.

Its subcellular location is the cytoplasm. It localises to the nucleus. It catalyses the reaction AMP + ATP = 2 ADP. The catalysed reaction is ATP + H2O = ADP + phosphate + H(+). Its function is as follows. Broad-specificity nucleoside monophosphate (NMP) kinase that catalyzes the reversible transfer of the terminal phosphate group between nucleoside triphosphates and monophosphates. Also has ATPase activity. Involved in the late cytoplasmic maturation steps of the 40S ribosomal particles, specifically 18S rRNA maturation. Required for cleavage of the 20S pre-rRNA at site D in the cytoplasm. While NMP activity is not required for ribosome maturation, ATPase activity is. Associates transiently with small ribosomal subunit protein uS11. ATP hydrolysis breaks the interaction with uS11. May temporarily remove uS11 from the ribosome to enable a conformational change of the ribosomal RNA that is needed for the final maturation step of the small ribosomal subunit. Promotes formation of the rotated state in 80S-like ribosomes, a key intermediate in translocation, thereby releasing the essential assembly factor DIM1 from pre-40S subunits. Its NMP activity may have a role in nuclear energy homeostasis. Involved in oxidative stress response. Required for POS9-dependent target gene transcription upon oxidative stress. The chain is Adenylate kinase isoenzyme 6 homolog FAP7 from Saccharomyces cerevisiae (strain ATCC 204508 / S288c) (Baker's yeast).